Reading from the N-terminus, the 457-residue chain is Multidrug resistance protein MdtK (457 aa).

Helical transmembrane passes span 11–31, 53–73, 93–113, 127–147, 160–180, 189–209, 243–263, 276–296, 314–334, 357–377, 387–407, and 418–438; these read LLALAIPVIIAQVAQTSMGFV, IWLPAILFGHGLLLALTPVIA, WLAGFVSILIMVVLWNAGYII, AVGYLRALLWGAPGYLFFQVA, GMVMGFIGLLVNIPVNYIFIY, GGVGCGVATAAVYWVMFFSMI, LPIALALFFEVTLFAVVALLV, IALNFSSLMFVLPMSLAAAVT, AARTGLGVGVCMAFCTALFTV, LMLLAAIYQLSDSIQVIGSGI, IFFITFTAYWVLGLPTGYILA, and PAGFWMGFIIGLTSAAILMML.

This sequence belongs to the multi antimicrobial extrusion (MATE) (TC 2.A.66.1) family. MdtK subfamily.

It localises to the cell inner membrane. Functionally, multidrug efflux pump that functions probably as a Na(+)/drug antiporter. The chain is Multidrug resistance protein MdtK from Enterobacter sp. (strain 638).